We begin with the raw amino-acid sequence, 222 residues long: MTENRQLGALLAACHWIGEKGWCPATGGNMSLRLDLAHCLITESGKDKGSLAAEDFLLVETANNHVPSGRTPSAETGLHTLLYRLYPEIQAVLHTHSVNATVLSRVERSNALVLQGYEMQKSLSGQRSHLDAVVIPIFDNDQDIPALAQRVAAYADNRPLQYGFLVRGHGLYCWGNSVVEARRHLEGLEFLFQCELQRRLFDVNSNVDVKPNVDVNPNVEAK.

Zn(2+) is bound by residues histidine 94 and histidine 96.

This sequence belongs to the aldolase class II family. MtnB subfamily. The cofactor is Zn(2+).

The catalysed reaction is 5-(methylsulfanyl)-D-ribulose 1-phosphate = 5-methylsulfanyl-2,3-dioxopentyl phosphate + H2O. It functions in the pathway amino-acid biosynthesis; L-methionine biosynthesis via salvage pathway; L-methionine from S-methyl-5-thio-alpha-D-ribose 1-phosphate: step 2/6. In terms of biological role, catalyzes the dehydration of methylthioribulose-1-phosphate (MTRu-1-P) into 2,3-diketo-5-methylthiopentyl-1-phosphate (DK-MTP-1-P). The chain is Methylthioribulose-1-phosphate dehydratase from Yersinia pseudotuberculosis serotype O:1b (strain IP 31758).